Consider the following 122-residue polypeptide: Large ribosomal subunit protein uL14c (122 aa).

It belongs to the universal ribosomal protein uL14 family. As to quaternary structure, part of the 50S ribosomal subunit.

It localises to the plastid. It is found in the chloroplast. Binds to 23S rRNA. The chain is Large ribosomal subunit protein uL14c from Mesostigma viride (Green alga).